A 292-amino-acid polypeptide reads, in one-letter code: Triplex capsid protein 2 (292 aa).

It belongs to the herpesviridae TRX2 protein family. In terms of assembly, interacts with TRX1 and major capisd protein/MCP.

It localises to the virion. The protein localises to the host nucleus. Its function is as follows. Structural component of the T=16 icosahedral capsid. The capsid is composed of pentamers and hexamers of major capsid protein/MCP, which are linked together by heterotrimers called triplexes. These triplexes are formed by a single molecule of triplex protein 1/TRX1 and two copies of triplex protein 2/TRX2. Additionally, TRX1 is required for efficient transport of TRX2 to the nucleus, which is the site of capsid assembly. This chain is Triplex capsid protein 2, found in Elephas maximus (Indian elephant).